The chain runs to 1000 residues: Receptor-type tyrosine-protein kinase FLT3 (1000 aa).

Residues 1 to 27 (MRALAQRSDRRLLLLVVLSVMILETVT) form the signal peptide. The Extracellular segment spans residues 28–544 (NQDLPVIKCV…PFPFIQDNIS (517 aa)). 2 disulfide bridges follow: Cys-36-Cys-66 and Cys-104-Cys-115. Residue Asn-44 is glycosylated (N-linked (GlcNAc...) asparagine). The disordered stretch occupies residues 45–67 (GSSAGKPSSYRMVRGSPEDLQCT). Asn-133 and Asn-152 each carry an N-linked (GlcNAc...) asparagine glycan. Disulfide bonds link Cys-200–Cys-207 and Cys-273–Cys-331. Residues 254-344 (PQSTLPQLFL…KHPSQSALVT (91 aa)) form the Ig-like C2-type domain. N-linked (GlcNAc...) asparagine glycosylation is found at Asn-307, Asn-324, and Asn-352. Cystine bridges form between Cys-369-Cys-408 and Cys-382-Cys-393. 4 N-linked (GlcNAc...) asparagine glycosylation sites follow: Asn-445, Asn-474, Asn-503, and Asn-542. A helical transmembrane segment spans residues 545–564 (FYATIGLCLPFIVVLIVLIC). The Cytoplasmic portion of the chain corresponds to 565-992 (HKYKKQFRYE…GSEPPSPQAQ (428 aa)). Tyr-573 carries the post-translational modification Phosphotyrosine. Phosphoserine is present on Ser-575. Phosphotyrosine; by autocatalysis is present on residues Tyr-590 and Tyr-592. Positions 592–598 (YVDFRDY) are important for normal regulation of the kinase activity and for maintaining the kinase in an inactive state in the absence of ligand binding. Tyr-600 is modified (phosphotyrosine). The Protein kinase domain occupies 611 to 946 (LEFGKVLGSG…PSFPNLTSFL (336 aa)). Residues 617–625 (LGSGAFGRV) and Lys-645 each bind ATP. Residue Tyr-727 is modified to Phosphotyrosine; by autocatalysis. Ser-760 is modified (phosphoserine). Phosphotyrosine occurs at positions 769 and 796. Asp-814 (proton acceptor) is an active-site residue. Residue Tyr-845 is modified to Phosphotyrosine; by autocatalysis. 2 positions are modified to phosphotyrosine: Tyr-958 and Tyr-972. The segment at 968-1000 (HPSIYQNRRPLSREAGSEPPSPQAQVKIHRERS) is disordered. Ser-1000 carries the phosphoserine modification.

It belongs to the protein kinase superfamily. Tyr protein kinase family. CSF-1/PDGF receptor subfamily. As to quaternary structure, monomer in the absence of bound FLT3LG. Homodimer in the presence of bound FLT3LG. Interacts with FIZ1 following ligand activation. Interacts with FES, FER, LYN, FGR, HCK, SRC and GRB2. Interacts with PTPRJ/DEP-1 and PTPN11/SHP2. Interacts with RNF115 and RNF126. Post-translationally, N-glycosylated, contains complex N-glycans with sialic acid. Autophosphorylated on several tyrosine residues in response to FLT3LG binding. FLT3LG binding also increases phosphorylation of mutant kinases that are constitutively activated. Dephosphorylated by PTPRJ/DEP-1, PTPN1, PTPN6/SHP-1, and to a lesser degree by PTPN12. Dephosphorylation is important for export from the endoplasmic reticulum and location at the cell membrane. In terms of processing, rapidly ubiquitinated by UBE2L6 and the E3 ubiquitin-protein ligase SIAH1 after autophosphorylation, leading to its proteasomal degradation. In terms of tissue distribution, hematopoietic stem and progenitor cell-enriched populations. Found in brain, placenta and testis.

It localises to the membrane. Its subcellular location is the endoplasmic reticulum lumen. It carries out the reaction L-tyrosyl-[protein] + ATP = O-phospho-L-tyrosyl-[protein] + ADP + H(+). With respect to regulation, present in an inactive conformation in the absence of bound ligand. FLT3LG binding leads to dimerization and activation by autophosphorylation. In terms of biological role, tyrosine-protein kinase that acts as a cell-surface receptor for the cytokine FLT3LG and regulates differentiation, proliferation and survival of hematopoietic progenitor cells and of dendritic cells. Promotes phosphorylation of SHC1 and AKT1, and activation of the downstream effector MTOR. Promotes activation of RAS signaling and phosphorylation of downstream kinases, including MAPK1/ERK2 and/or MAPK3/ERK1. Promotes phosphorylation of FES, FER, PTPN6/SHP, PTPN11/SHP-2, PLCG1, and STAT5A and/or STAT5B. Activation of wild-type FLT3 causes only marginal activation of STAT5A or STAT5B. Mutations that cause constitutive kinase activity promote cell proliferation and resistance to apoptosis via the activation of multiple signaling pathways. The polypeptide is Receptor-type tyrosine-protein kinase FLT3 (Flt3) (Mus musculus (Mouse)).